The primary structure comprises 524 residues: Coatomer subunit delta-1 (524 aa).

The tract at residues 215 to 244 (MDMDSFASKPKGGRPSAAATAPGKGLGMKL) is disordered. The MHD domain maps to 283 to 524 (SDPVTVTIEE…RLVAANYQVV (242 aa)).

The protein belongs to the adaptor complexes medium subunit family. Delta-COP subfamily. As to quaternary structure, oligomeric complex that consists of at least the alpha, beta, beta', gamma, delta, epsilon and zeta subunits.

The protein localises to the cytoplasm. It is found in the golgi apparatus membrane. Its subcellular location is the cytoplasmic vesicle. It localises to the COPI-coated vesicle membrane. Functionally, the coatomer is a cytosolic protein complex that binds to dilysine motifs and reversibly associates with Golgi non-clathrin-coated vesicles, which further mediate biosynthetic protein transport from the ER, via the Golgi up to the trans Golgi network. Coatomer complex is required for budding from Golgi membranes, and is essential for the retrograde Golgi-to-ER transport of dilysine-tagged proteins. The polypeptide is Coatomer subunit delta-1 (Oryza sativa subsp. japonica (Rice)).